Reading from the N-terminus, the 453-residue chain is F-box protein At4g27050 (453 aa).

The region spanning 3–51 (TDLISNLPDDVLGKILSLVPTKLAAATSVLSKRWRNLLPLVDSLDFDET) is the F-box domain.

Part of a SCF (ASK-cullin-F-box) protein ligase complex.

It participates in protein modification; protein ubiquitination. In terms of biological role, component of SCF(ASK-cullin-F-box) E3 ubiquitin ligase complexes, which may mediate the ubiquitination and subsequent proteasomal degradation of target proteins. This chain is F-box protein At4g27050, found in Arabidopsis thaliana (Mouse-ear cress).